The primary structure comprises 361 residues: 3-dehydroquinate synthase (361 aa).

Residues 72 to 77 (SGEKEK), 130 to 131 (TT), lysine 142, and lysine 151 contribute to the NAD(+) site. Zn(2+) is bound by residues glutamate 184, histidine 247, and histidine 264.

Belongs to the sugar phosphate cyclases superfamily. Dehydroquinate synthase family. It depends on Co(2+) as a cofactor. Zn(2+) is required as a cofactor. The cofactor is NAD(+).

It localises to the cytoplasm. The enzyme catalyses 7-phospho-2-dehydro-3-deoxy-D-arabino-heptonate = 3-dehydroquinate + phosphate. It participates in metabolic intermediate biosynthesis; chorismate biosynthesis; chorismate from D-erythrose 4-phosphate and phosphoenolpyruvate: step 2/7. In terms of biological role, catalyzes the conversion of 3-deoxy-D-arabino-heptulosonate 7-phosphate (DAHP) to dehydroquinate (DHQ). The sequence is that of 3-dehydroquinate synthase from Bacillus cereus (strain B4264).